The primary structure comprises 276 residues: 3-methyl-2-oxobutanoate hydroxymethyltransferase (276 aa).

Residues aspartate 45 and aspartate 84 each coordinate Mg(2+). 3-methyl-2-oxobutanoate is bound by residues 45-46, aspartate 84, and lysine 114; that span reads DS. Glutamate 116 contributes to the Mg(2+) binding site. The active-site Proton acceptor is glutamate 183.

This sequence belongs to the PanB family. In terms of assembly, homodecamer; pentamer of dimers. Mg(2+) is required as a cofactor.

The protein resides in the cytoplasm. The enzyme catalyses 3-methyl-2-oxobutanoate + (6R)-5,10-methylene-5,6,7,8-tetrahydrofolate + H2O = 2-dehydropantoate + (6S)-5,6,7,8-tetrahydrofolate. The protein operates within cofactor biosynthesis; (R)-pantothenate biosynthesis; (R)-pantoate from 3-methyl-2-oxobutanoate: step 1/2. Functionally, catalyzes the reversible reaction in which hydroxymethyl group from 5,10-methylenetetrahydrofolate is transferred onto alpha-ketoisovalerate to form ketopantoate. The chain is 3-methyl-2-oxobutanoate hydroxymethyltransferase from Syntrophomonas wolfei subsp. wolfei (strain DSM 2245B / Goettingen).